Reading from the N-terminus, the 337-residue chain is Ribosomal RNA small subunit methyltransferase H (337 aa).

S-adenosyl-L-methionine-binding positions include 36-38 (GGH), aspartate 56, phenylalanine 82, aspartate 100, and glutamine 107. The interval 314 to 337 (GLERRSGRIPNPRSPIPASQGDAR) is disordered.

Belongs to the methyltransferase superfamily. RsmH family.

The protein resides in the cytoplasm. It catalyses the reaction cytidine(1402) in 16S rRNA + S-adenosyl-L-methionine = N(4)-methylcytidine(1402) in 16S rRNA + S-adenosyl-L-homocysteine + H(+). Its function is as follows. Specifically methylates the N4 position of cytidine in position 1402 (C1402) of 16S rRNA. The polypeptide is Ribosomal RNA small subunit methyltransferase H (Xanthomonas oryzae pv. oryzae (strain PXO99A)).